The chain runs to 218 residues: Thiopurine S-methyltransferase (218 aa).

S-adenosyl-L-methionine-binding residues include Trp-10, Leu-45, Glu-66, and Arg-123.

This sequence belongs to the class I-like SAM-binding methyltransferase superfamily. TPMT family.

It localises to the cytoplasm. It carries out the reaction S-adenosyl-L-methionine + a thiopurine = S-adenosyl-L-homocysteine + a thiopurine S-methylether.. This is Thiopurine S-methyltransferase from Shewanella baltica (strain OS155 / ATCC BAA-1091).